A 486-amino-acid polypeptide reads, in one-letter code: MKMWSGRFREPLDPAFDHWQRSLQFDWQLLPEEVAASKAHALALEAAGVLTAGEREALHNALDLVTSRFHAPDGSGPSWVMSNQEAEDIHHFVELQLVATVGDLGLKLHTGRSRNEQIATDLRLFVRSRAQMLQAYLGTWAEILVARAQQMGNAAMPAYTHLQRAEPVLVAHWLLAYAEMLLRDASRLEDCVRRLNYCPLGSGAVAGATLALDRGIASQALNFAAPTANSMDATSDRDFVLEFLQALTGIALHASRFAEEITLYATAEFGFVDLPEAYSTGSSAMPQKKNPDLTELVRAKVGRINGAAQAVTLLLKGLPLAYNKDMQETQEPLFQATIATHQMLHLLAKFTHALQFRTDHMQAACESGFLNAMAAATYLVHKGIPFRKAHEIVGHAVRLGLDKGCELAGLSLDELRSLSPEFGADFYDAVTLESTLDCHDVLGGTARAQVQASLEAMQRRTGDLVNARGRIDLGLSTVAEVSHADS.

It belongs to the lyase 1 family. Argininosuccinate lyase subfamily.

It localises to the cytoplasm. The enzyme catalyses 2-(N(omega)-L-arginino)succinate = fumarate + L-arginine. It participates in amino-acid biosynthesis; L-arginine biosynthesis; L-arginine from L-ornithine and carbamoyl phosphate: step 3/3. This Acidobacterium capsulatum (strain ATCC 51196 / DSM 11244 / BCRC 80197 / JCM 7670 / NBRC 15755 / NCIMB 13165 / 161) protein is Argininosuccinate lyase.